Here is a 142-residue protein sequence, read N- to C-terminus: Protein spalt-accessory (142 aa).

A signal peptide spans Met-1–Ala-16. Residues Gly-75 to His-142 form a disordered region. A compositionally biased stretch (basic and acidic residues) spans Gly-107–His-124. Basic residues predominate over residues Arg-125 to His-142.

The protein resides in the secreted. In terms of biological role, likely to be involved in the establishment of the head. The protein is Protein spalt-accessory (sala) of Drosophila melanogaster (Fruit fly).